A 332-amino-acid polypeptide reads, in one-letter code: Probable allantoicase (332 aa).

The protein belongs to the allantoicase family.

It catalyses the reaction allantoate + H2O = (S)-ureidoglycolate + urea. It functions in the pathway nitrogen metabolism; (S)-allantoin degradation; (S)-ureidoglycolate from allantoate (aminidohydrolase route): step 1/1. The sequence is that of Probable allantoicase from Pseudomonas paraeruginosa (strain DSM 24068 / PA7) (Pseudomonas aeruginosa (strain PA7)).